Here is a 510-residue protein sequence, read N- to C-terminus: Gallate 1-beta-glucosyltransferase (510 aa).

The Proton acceptor role is filled by H19. H19 provides a ligand contact to an anthocyanidin. The UDP-alpha-D-glucose site is built by Q343, H358, W361, N362, S363, and E366. Residue G381 participates in an anthocyanidin binding. Residues D382 and Q383 each contribute to the UDP-alpha-D-glucose site.

This sequence belongs to the UDP-glycosyltransferase family. As to expression, expressed in swelling buds and young leaves.

It carries out the reaction 3,4,5-trihydroxybenzoate + UDP-alpha-D-glucose = 1-O-galloyl-beta-D-glucose + UDP. It catalyses the reaction vanillate + UDP-alpha-D-glucose = 1-O-(4-hydroxy-3-methoxybenzoyl)-beta-D-glucose + UDP. The catalysed reaction is 3,4-dihydroxybenzoate + UDP-alpha-D-glucose = 1-O-(3,4-dihydroxy-benzoyl)-beta-D-glucose + UDP. In terms of biological role, glucosyltransferase that catalyzes the formation of 1-O-beta-D-glucose esters with hydroxybenzoic acids as preferred glucosyl acceptors. Has the highest activity with 3,4-dihydroxybenzoate, vanillate and gallate in vitro. Gallate is the predicted native substrate of the enzyme, which thus catalyzes the formation of 1-O-galloyl-beta-D-glucose, the first committed step of gallotannin biosynthesis. The sequence is that of Gallate 1-beta-glucosyltransferase from Quercus robur (English oak).